A 142-amino-acid polypeptide reads, in one-letter code: MATKIDKEACRAAYNLVRDDGSSVIWVTFKYDGATIVPGDQGADYQHFIQQCTDDVRLFAFVRFTTGDAMSKRSKFALITWIGEDVSGLQRAKTGTDKTLVKEVVQNFAKEFVISDRKELEEDFIRSELKKAGGANYDAQSE.

An N-acetylalanine modification is found at Ala-2. The 129-residue stretch at 2–130 (ATKIDKEACR…EEDFIRSELK (129 aa)) folds into the ADF-H domain. A Phosphoserine modification is found at Ser-23. The tract at residues 66 to 75 (TGDAMSKRSK) is flexible and important for F-actin binding. An N6-acetyllysine modification is found at Lys-102. Ser-141 carries the phosphoserine modification.

This sequence belongs to the actin-binding proteins ADF family. Coactosin subfamily. Interacts with 5-lipoxygenase (ALOX5/5LO) in a calcium-independent manner. Binds to F-actin with a stoichiometry of 1:2.

It localises to the cytoplasm. The protein localises to the cytoskeleton. Its subcellular location is the nucleus. In terms of biological role, binds to F-actin in a calcium-independent manner. Has no direct effect on actin depolymerization. Acts as a chaperone for ALOX5 (5LO), influencing both its stability and activity in leukotrienes synthesis. This is Coactosin-like protein from Rattus norvegicus (Rat).